The sequence spans 215 residues: FMN-dependent NADH:quinone oxidoreductase 1 (215 aa).

Belongs to the azoreductase type 1 family. As to quaternary structure, homodimer. FMN serves as cofactor.

The catalysed reaction is 2 a quinone + NADH + H(+) = 2 a 1,4-benzosemiquinone + NAD(+). It catalyses the reaction N,N-dimethyl-1,4-phenylenediamine + anthranilate + 2 NAD(+) = 2-(4-dimethylaminophenyl)diazenylbenzoate + 2 NADH + 2 H(+). Its function is as follows. Quinone reductase that provides resistance to thiol-specific stress caused by electrophilic quinones. Functionally, also exhibits azoreductase activity. Catalyzes the reductive cleavage of the azo bond in aromatic azo compounds to the corresponding amines. The sequence is that of FMN-dependent NADH:quinone oxidoreductase 1 from Lactiplantibacillus plantarum (strain ATCC BAA-793 / NCIMB 8826 / WCFS1) (Lactobacillus plantarum).